We begin with the raw amino-acid sequence, 344 residues long: Ig alpha chain C region (344 aa).

The Ig-like 1 domain maps to P6–N99. 2 disulfides stabilise this stretch: C26/C84 and C76/C100. 2 N-linked (GlcNAc...) asparagine glycosylation sites follow: N38 and N99. Residue S101 is glycosylated (O-linked (GalNAc) serine; in variant MOPC 47A). 2 disulfides stabilise this stretch: C114–C171 and C138–C195. Ig-like domains are found at residues P116–T206 and P219–D321. N-linked (GlcNAc...) asparagine glycosylation is present at N329. S331 carries N-linked (GlcNAc...) asparagine; in variant M511 glycosylation.

Ig alpha is the major immunoglobulin class in body secretions. It may serve both to defend against local infection and to prevent access of foreign antigens to the general immunologic system. This chain is Ig alpha chain C region, found in Mus musculus (Mouse).